We begin with the raw amino-acid sequence, 98 residues long: Citrate lyase acyl carrier protein 1 (98 aa).

Serine 14 is modified (O-(phosphoribosyl dephospho-coenzyme A)serine).

Belongs to the CitD family. As to quaternary structure, oligomer with a subunit composition of (alpha,beta,gamma)6.

Its subcellular location is the cytoplasm. Its function is as follows. Covalent carrier of the coenzyme of citrate lyase. The sequence is that of Citrate lyase acyl carrier protein 1 from Salmonella paratyphi A (strain ATCC 9150 / SARB42).